A 124-amino-acid chain; its full sequence is Cytoinsectotoxin-4 (124 aa).

Positions 1 to 19 (MKCFILAAALVLAFACIAA) are cleaved as a signal peptide. Positions 20–62 (SEPAETENEDLDDLSDLEDEEWLDELEEAAEYLESLREFEESR) are excised as a propeptide. Phe-123 carries the post-translational modification Phenylalanine amide.

Belongs to the cationic peptide 06 (cytoinsectotoxin) family. As to expression, expressed by the venom gland.

The protein resides in the secreted. Its function is as follows. Insecticidal and antimicrobial peptide. Has insecticidal activity against larvae of flesh fly S.carnaria. Has antibacterial activity against Gram-positive bacterium B.subtilis B-501 (MIC=2.5 uM) and Gram-negative bacterium E.coli DH5alpha (MIC=10 uM). In Lachesana tarabaevi (Spider), this protein is Cytoinsectotoxin-4.